The chain runs to 598 residues: MVRDRVIELFRKALAQGADDGRWPAADAGFSVEAPRDPKHGDFAVNAAMVLAKQAGKPPRELAQAIVEAVRAADTAGDLAGLEIAGPGFINVRLSPDLWLRTLARAVAEGPAYGRTAVGQGKKVIVEYVSANPTGPMHVGHGRNAVVGDGVQGLLRWAGFDVSREYYVNDYGAQVQTLARSVHLRYQELHGRAVTMPPKSYPGEYVKDIAAGLKAEYGARFLDAPEAEWLTLFRDHAVQHVLGMIREDLAAVNISFDRWSSEKALYESGTVDRFLRFLEEKDLVYVGKLPPPKSKKGQPPPQAQPDEEGVTAAEDLTLFRSSAYGDEVDRPVKKADGTPTYFCADIAYHWDKRQRADALVDVLGADHGGYVPRLEAAMEALGASRKDLHVVLIQMVSLMRGGESVKMSKRAGTLVSLREVVDEVGRDATRFIFLTRRSDAPLDFDVELAKKQTLDNPVFYVQYGHARLAAIFQKAREAGHAVPEFDLDAARTLGSPEEQDLIRRIAAFPDLLAAAALAYEPHRVAFYLQETIAAFHSWYTQGKKSGEKVIGPDPVKTAARLFLCRALKQVLANGLAVLGVSAPDRMESPETRDIADDV.

Positions Ala-131–His-141 match the 'HIGH' region motif. A disordered region spans residues Lys-288–Gly-309.

This sequence belongs to the class-I aminoacyl-tRNA synthetase family. In terms of assembly, monomer.

It localises to the cytoplasm. It carries out the reaction tRNA(Arg) + L-arginine + ATP = L-arginyl-tRNA(Arg) + AMP + diphosphate. This Anaeromyxobacter dehalogenans (strain 2CP-C) protein is Arginine--tRNA ligase.